Reading from the N-terminus, the 131-residue chain is Histone H2B.1 (131 aa).

Over residues 1–20 (MAPPKAEKKPASKAPAEKKP) the composition is skewed to basic and acidic residues. Residues 1-39 (MAPPKAEKKPASKAPAEKKPAAKKTASATDSKKRTKTRK) form a disordered region. Lys-8 and Lys-9 each carry N6-acetyllysine; alternate. Glycyl lysine isopeptide (Lys-Gly) (interchain with G-Cter in SUMO); alternate cross-links involve residues Lys-8 and Lys-9. Ser-12 carries the phosphoserine modification. An N6-acetyllysine modification is found at Lys-13. Lys-18 bears the N6-acetyllysine; alternate mark. Lys-18 participates in a covalent cross-link: Glycyl lysine isopeptide (Lys-Gly) (interchain with G-Cter in SUMO); alternate. Lys-19 is covalently cross-linked (Glycyl lysine isopeptide (Lys-Gly) (interchain with G-Cter in SUMO)). A Glycyl lysine isopeptide (Lys-Gly) (interchain with G-Cter in ubiquitin) cross-link involves residue Lys-125.

The protein belongs to the histone H2B family. As to quaternary structure, the nucleosome is a histone octamer containing two molecules each of H2A, H2B, H3 and H4 assembled in one H3-H4 heterotetramer and two H2A-H2B heterodimers. The octamer wraps approximately 147 bp of DNA. In terms of processing, monoubiquitinated to form H2BK123ub1. H2BK123ub1 gives a specific tag for epigenetic transcriptional activation and is also prerequisite for H3K4me and H3K79me formation. H2BK123ub1 also modulates the formation of double-strand breaks during meiosis and is a prerequisite for DNA-damage checkpoint activation. Post-translationally, phosphorylated by STE20 to form H2BS10ph during progression through meiotic prophase. May be correlated with chromosome condensation. Acetylated by GCN5 to form H2BK11ac and H2BK16ac. H2BK16ac can also be formed by ESA1. Acetylation of N-terminal lysines and particularly formation of H2BK11acK16ac has a positive effect on transcription. In terms of processing, sumoylation to form H2BK6su or H2BK7su, and probably also H2BK16su or H2BK17su, occurs preferentially near the telomeres and represses gene transcription.

It is found in the nucleus. It localises to the chromosome. Core component of nucleosome. Nucleosomes wrap and compact DNA into chromatin, limiting DNA accessibility to the cellular machineries which require DNA as a template. Histones thereby play a central role in transcription regulation, DNA repair, DNA replication and chromosomal stability. DNA accessibility is regulated via a complex set of post-translational modifications of histones, also called histone code, and nucleosome remodeling. In Scheffersomyces stipitis (strain ATCC 58785 / CBS 6054 / NBRC 10063 / NRRL Y-11545) (Yeast), this protein is Histone H2B.1 (HTB1).